Consider the following 241-residue polypeptide: Probable transcriptional regulatory protein lin1570 (241 aa).

The segment covering 1 to 14 has biased composition (polar residues); that stretch reads MAGHSKWNNIQGRK. The tract at residues 1–22 is disordered; sequence MAGHSKWNNIQGRKNAQDSKRS.

Belongs to the TACO1 family.

The protein localises to the cytoplasm. The sequence is that of Probable transcriptional regulatory protein lin1570 from Listeria innocua serovar 6a (strain ATCC BAA-680 / CLIP 11262).